A 402-amino-acid chain; its full sequence is Acyl-[acyl-carrier-protein] desaturase 3, chloroplastic (402 aa).

Disordered regions lie at residues 1–25 and 38–66; these read MSLT…GGAS and VGGI…THTL. Residues 1 to 32 constitute a chloroplast transit peptide; the sequence is MSLTGCLPPRPPCSMRRRTSGGGASVSPVVVM. Fe cation contacts are provided by Glu139, Glu178, His181, Glu231, Glu264, and His267.

The protein belongs to the fatty acid desaturase type 2 family. In terms of assembly, homodimer. Requires Fe(2+) as cofactor.

It is found in the plastid. It localises to the chloroplast. The protein operates within lipid metabolism; fatty acid metabolism. In terms of biological role, introduces a cis double bond in the acyl chain of an acyl-[acyl-carrier protein]. This is Acyl-[acyl-carrier-protein] desaturase 3, chloroplastic from Oryza sativa subsp. indica (Rice).